A 353-amino-acid polypeptide reads, in one-letter code: C-X-C chemokine receptor type 4 (353 aa).

Positions methionine 1–tyrosine 22 are important for chemokine binding and signaling. The Extracellular segment spans residues methionine 1–arginine 39. Tyrosine 7 bears the Sulfotyrosine mark. Asparagine 11 is a glycosylation site (N-linked (GlcNAc...) asparagine). Residue tyrosine 12 is modified to Sulfotyrosine. O-linked (Xyl...) (chondroitin sulfate) serine glycosylation is present at serine 19. At tyrosine 22 the chain carries Sulfotyrosine. Disulfide bonds link cysteine 29-cysteine 275 and cysteine 110-cysteine 187. The helical transmembrane segment at isoleucine 40–methionine 64 threads the bilayer. The Cytoplasmic portion of the chain corresponds to glycine 65–arginine 78. A helical membrane pass occupies residues leucine 79–valine 100. The tract at residues tryptophan 95–glutamate 98 is chemokine binding. Topologically, residues alanine 101–lysine 111 are extracellular. The helical transmembrane segment at alanine 112–isoleucine 131 threads the bilayer. Residues histidine 114 to threonine 118 are chemokine binding. Residues serine 132–lysine 155 lie on the Cytoplasmic side of the membrane. The short motif at aspartate 134–tyrosine 136 is the Important for signaling element. Residues tyrosine 136–proline 148 form an involved in dimerization; when bound to chemokine region. The helical transmembrane segment at valine 156–phenylalanine 175 threads the bilayer. Over alanine 176–tryptophan 196 the chain is Extracellular. A chemokine binding, important for signaling region spans residues cysteine 187–tyrosine 191. The segment at proline 192–leucine 211 is involved in dimerization. The chain crosses the membrane as a helical span at residues leucine 197 to leucine 217. The Cytoplasmic segment spans residues serine 218–threonine 242. The helical transmembrane segment at valine 243–isoleucine 262 threads the bilayer. Residues aspartate 263–lysine 283 are Extracellular-facing. The tract at residues leucine 267 to glutamate 269 is involved in dimerization. A helical transmembrane segment spans residues tryptophan 284–tyrosine 303. Topologically, residues alanine 304 to serine 353 are cytoplasmic. A phosphoserine mark is found at serine 320 and serine 322. Residues serine 325 and serine 326 each carry the phosphoserine; by PKC and GRK6 modification. The tract at residues leucine 330–serine 353 is disordered. Serine 331 is subject to Phosphoserine; by GRK6. Residue lysine 332 forms a Glycyl lysine isopeptide (Lys-Gly) (interchain with G-Cter in ubiquitin) linkage. A compositionally biased stretch (low complexity) spans histidine 338–serine 353. A Phosphoserine; by GRK6 modification is found at serine 340. Phosphoserine occurs at positions 349 and 352.

The protein belongs to the G-protein coupled receptor 1 family. In terms of assembly, monomer. Can form homodimers. Interacts with CD164. Interacts with ARRB2; the interaction is dependent on the C-terminal phosphorylation of CXCR4 and allows activation of MAPK1 and MAPK3. Interacts with ARR3; the interaction is dependent on the C-terminal phosphorylation of CXCR4 and modulates calcium mobilization. Interacts with RNF113A; the interaction, enhanced by CXCL12, promotes CXCR4 ubiquitination and subsequent degradation. Interacts (via the cytoplasmic C-terminal) with ITCH (via the WW domains I and II); the interaction, enhanced by CXCL12, promotes CXCR4 ubiquitination and leads to its degradation. Interacts with extracellular ubiquitin. Interacts with DBN1; this interaction is enhanced by antigenic stimulation. Following LPS binding, may form a complex with GDF5, HSP90AA1 and HSPA8. In terms of processing, phosphorylated on agonist stimulation. Rapidly phosphorylated on serine and threonine residues in the C-terminal. Phosphorylation at Ser-325 and Ser-326 leads to recruitment of ITCH, ubiquitination and protein degradation. Post-translationally, ubiquitinated after ligand binding, leading to its degradation. Ubiquitinated by ITCH at the cell membrane on agonist stimulation. The ubiquitin-dependent mechanism, endosomal sorting complex required for transport (ESCRT), then targets CXCR4 for lysosomal degradation. This process is dependent also on prior Ser-/Thr-phosphorylation in the C-terminal of CXCR4. Also binding of ARRB1 to STAM negatively regulates CXCR4 sorting to lysosomes though modulating ubiquitination of SFR5S. Sulfation is required for efficient binding of CXCL12/SDF-1alpha and promotes its dimerization. In terms of processing, O- and N-glycosylated. N-glycosylation can mask coreceptor function. The O-glycosylation chondroitin sulfate attachment does not affect interaction with CXCL12/SDF-1alpha nor its coreceptor activity.

The protein resides in the cell membrane. It is found in the cell junction. It localises to the early endosome. Its subcellular location is the late endosome. The protein localises to the lysosome. Functionally, receptor for the C-X-C chemokine CXCL12/SDF-1 that transduces a signal by increasing intracellular calcium ion levels and enhancing MAPK1/MAPK3 activation. Involved in the AKT signaling cascade. Plays a role in regulation of cell migration, e.g. during wound healing. Acts as a receptor for extracellular ubiquitin; leading to enhanced intracellular calcium ions and reduced cellular cAMP levels. Binds bacterial lipopolysaccharide (LPS) et mediates LPS-induced inflammatory response, including TNF secretion by monocytes. Involved in hematopoiesis and in cardiac ventricular septum formation. Also plays an essential role in vascularization of the gastrointestinal tract, probably by regulating vascular branching and/or remodeling processes in endothelial cells. Involved in cerebellar development. In the CNS, could mediate hippocampal-neuron survival. The sequence is that of C-X-C chemokine receptor type 4 (CXCR4) from Canis lupus familiaris (Dog).